Reading from the N-terminus, the 439-residue chain is Maintenance of mitochondrial morphology protein 1 (439 aa).

The Lumenal segment spans residues 1–76; the sequence is MSQDLIETTA…NGNTWSFTQG (76 aa). A helical transmembrane segment spans residues 77–97; it reads LVIGQVSVIFIIIVFVKFFVF. Over 98-439 the chain is Cytoplasmic; that stretch reads ADSSSHIPTK…TPGEYVNSNI (342 aa). Disordered stretches follow at residues 125–145, 309–336, and 405–425; these read KHSN…SLDS, MNGY…DGGT, and REPV…GTSA. In terms of domain architecture, SMP-LTD spans 165–395; the sequence is ASESLDWFNV…EPRFQVVRLP (231 aa). Low complexity-rich tracts occupy residues 315–326 and 410–424; these read ENANGDGASSSN and KKTT…NGTS.

Belongs to the MMM1 family. In terms of assembly, homodimer. Component of the ER-mitochondria encounter structure (ERMES) or MDM complex, composed of MMM1, MDM10, MDM12 and MDM34. An MMM1 homodimer associates with one molecule of MDM12 on each side in a pairwise head-to-tail manner, and the SMP-LTD domains of MMM1 and MDM12 generate a continuous hydrophobic tunnel for phospholipid trafficking.

Its subcellular location is the endoplasmic reticulum membrane. Its function is as follows. Component of the ERMES/MDM complex, which serves as a molecular tether to connect the endoplasmic reticulum (ER) and mitochondria. Components of this complex are involved in the control of mitochondrial shape and protein biogenesis, and function in nonvesicular lipid trafficking between the ER and mitochondria. The MDM12-MMM1 subcomplex functions in the major beta-barrel assembly pathway that is responsible for biogenesis of all outer membrane beta-barrel proteins, and acts in a late step after the SAM complex. The MDM10-MDM12-MMM1 subcomplex further acts in the TOM40-specific pathway after the action of the MDM12-MMM1 complex. Essential for establishing and maintaining the structure of mitochondria and maintenance of mtDNA nucleoids. The polypeptide is Maintenance of mitochondrial morphology protein 1 (Candida albicans (strain SC5314 / ATCC MYA-2876) (Yeast)).